The sequence spans 470 residues: Leucine-rich repeat extensin-like protein 6 (470 aa).

The first 28 residues, 1–28 (MREDTFFFQWWFLVSGLSFIFLLPQAFT), serve as a signal peptide directing secretion. N-linked (GlcNAc...) asparagine glycosylation is present at Asn83. LRR repeat units lie at residues 98–122 (VLTV…LGLL), 123–146 (TDLA…LKCL), 147–170 (HLLH…IFSL), 171–194 (PSLK…LFDL), 196–217 (LDAL…IGNS), 219–241 (VSVL…FYKM), 243–265 (KTLH…EIGL), 266–290 (LNQL…IGDM), 291–314 (KSLE…ICRL), and 316–337 (RLEN…CLRL). Residue Asn319 is glycosylated (N-linked (GlcNAc...) asparagine). A disordered region spans residues 378–411 (SPPPPPPPPPPPPPPPPPPPPPPPPPPPPPYVYP). A contains the Ser-Pro(4) repeats region spans residues 378-470 (SPPPPPPPPP…CNDLPTPVHY (93 aa)).

Hydroxylated on proline residues in the S-P-P-P-P repeat. In terms of processing, O-glycosylated on hydroxyprolines. In terms of tissue distribution, expressed in roots.

It localises to the secreted. The protein localises to the cell wall. Functionally, modulates cell morphogenesis by regulating cell wall formation and assembly, and/or growth polarization. The chain is Leucine-rich repeat extensin-like protein 6 (LRX6) from Arabidopsis thaliana (Mouse-ear cress).